We begin with the raw amino-acid sequence, 81 residues long: Costars family protein ABRACL (81 aa).

Belongs to the costars family.

The sequence is that of Costars family protein ABRACL from Salmo salar (Atlantic salmon).